A 229-amino-acid chain; its full sequence is Rab-like protein 2A (229 aa).

GTP-binding positions include 28-35, 76-80, and 133-136; these read GDSAVGKS, DTAGQ, and NKID. A disordered region spans residues 200–229; sequence NLEQEEEDVPDQEQSGSIETPSEEVASPHS.

The protein belongs to the small GTPase superfamily. Rab family. Interacts with IFT27, IFT81, IFT172, ATP6V1E1, HK1, LDHC, MAPRE1 and HSPA2.

In terms of biological role, plays an essential role in male fertility, sperm intra-flagellar transport, and tail assembly. Binds, in a GTP-regulated manner, to a specific set of effector proteins including key proteins involved in cilia development and function and delivers them into the growing sperm tail. The chain is Rab-like protein 2A (RABL2A) from Pongo abelii (Sumatran orangutan).